Reading from the N-terminus, the 87-residue chain is U3-theraphotoxin-Hhn1p (87 aa).

The signal sequence occupies residues M1–A24. The propeptide occupies S25–R52. 3 disulfides stabilise this stretch: C54-C67, C61-C72, and C66-C79.

The protein belongs to the neurotoxin 10 (Hwtx-1) family. 51 (Hntx-8) subfamily. Hntx-8 sub-subfamily. Expressed by the venom gland.

The protein localises to the secreted. Ion channel inhibitor. The sequence is that of U3-theraphotoxin-Hhn1p from Cyriopagopus hainanus (Chinese bird spider).